Consider the following 807-residue polypeptide: Probable E3 ubiquitin-protein ligase mug30 (807 aa).

In terms of domain architecture, HECT spans 453–807 (RNKDFRKALK…LLETNGFNIR (355 aa)). C775 serves as the catalytic Glycyl thioester intermediate.

Its subcellular location is the cytoplasm. The protein resides in the cytoskeleton. It localises to the microtubule organizing center. The protein localises to the spindle pole body. It catalyses the reaction S-ubiquitinyl-[E2 ubiquitin-conjugating enzyme]-L-cysteine + [acceptor protein]-L-lysine = [E2 ubiquitin-conjugating enzyme]-L-cysteine + N(6)-ubiquitinyl-[acceptor protein]-L-lysine.. It participates in protein modification; protein ubiquitination. In terms of biological role, probable E3 ubiquitin-protein ligase. Has a role in meiosis. This chain is Probable E3 ubiquitin-protein ligase mug30 (mug30), found in Schizosaccharomyces pombe (strain 972 / ATCC 24843) (Fission yeast).